A 745-amino-acid chain; its full sequence is uncharacterized protein (745 aa).

One can recognise an HTH araC/xylS-type domain in the interval Asn-158–Asp-256. 2 DNA-binding regions (H-T-H motif) span residues Ser-175–Leu-196 and Ile-223–Thr-246.

This is an uncharacterized protein from Staphylococcus aureus (strain MRSA252).